Consider the following 137-residue polypeptide: Bacteriohemerythrin (137 aa).

7 residues coordinate Fe cation: His-21, His-53, Glu-57, His-72, His-76, His-112, and Asp-117.

The protein belongs to the hemerythrin family. Monomer.

Its function is as follows. Oxygen-binding protein. May be involved in a storage mechanism or for delivery to oxygen-requiring enzymes. The oxygen-binding site contains two iron atoms. This Ralstonia nicotianae (strain ATCC BAA-1114 / GMI1000) (Ralstonia solanacearum) protein is Bacteriohemerythrin.